The sequence spans 467 residues: Iroquois-class homeodomain protein irx-1 (467 aa).

Residues 126–188 constitute a DNA-binding region (homeobox; TALE-type); that stretch reads DPGRPKNATR…NARRRLKKEN (63 aa). Disordered stretches follow at residues 198 to 307, 319 to 342, and 410 to 467; these read EDDN…PHNK, SPDGALKSSPPPSQANHTSPPIQH, and SLSS…LPSA. 2 stretches are compositionally biased toward acidic residues: residues 215–225 and 233–244; these read EDDEEIDLESI and NDGEQSNEEEDE. Residues 245-262 show a composition bias toward basic and acidic residues; sequence KLEHLRQGEKESFKKESE. Over residues 415–431 the composition is skewed to basic and acidic residues; it reads KTPERTSPKHSDRENLP. Residues 447 to 460 show a composition bias toward polar residues; the sequence is RENTLSQQEGTSRI.

The protein belongs to the TALE/IRO homeobox family. Expressed in the neural plate in overlapping patterns with other irx members, which all share an anterior border of expression. Also expressed in the mesoderm, placodes and notochord. Broadly expressed in the tailbud rhombencephalon (hindbrain). Outside the nervous system and at tailbud stages, expressed in the developing otic vesicle, branchial arches, prospective heart region and pronephros.

The protein resides in the nucleus. Its function is as follows. Acts partially redundantly with other irx members in neural patterning. Required for formation of the posterior forebrain, midbrain, hindbrain, and to a lesser extent, spinal cord. Acts early in neural plate development to induce expression of some but not all proneural genes, and specify a neural precursor state. Also up-regulates repressors that prevent neuronal differentiation. Patterns the neuroectoderm in both the anterior/posterior and dorsal/ventral axes. Acts primarily as a transcriptional repressor during neural development, and binds to the bmp4 promoter to repress gene expression and thus mediate down-regulation of bmp4 by wnt signaling. Controls multiple processes through bmp4-repression including neural plate development, neural crest specification and Spemann organizer development. Involved in the specification of the preplacodal field at the anterior border of the neural plate. Regulates the genetic cascade of interactions that are necessary for positioning the isthmus organizer and the formation of the midbrain-hindbrain boundary. Required during at least two stages of pronephros kidney development; during neurula stages, maintains transcription of key renal genes to define the size and identity of the pronephric anlage, probably in part through regulation of bmp-signaling. Subsequently required for proper formation of the intermediate tubule segment of the pronephros. Acts principally as a transcriptional activator during pronephros development. This chain is Iroquois-class homeodomain protein irx-1, found in Xenopus tropicalis (Western clawed frog).